Here is a 315-residue protein sequence, read N- to C-terminus: Ribosomal RNA small subunit methyltransferase H (315 aa).

Residues 37 to 39 (GGH), aspartate 57, phenylalanine 83, aspartate 105, and glutamine 112 contribute to the S-adenosyl-L-methionine site.

This sequence belongs to the methyltransferase superfamily. RsmH family.

The protein resides in the cytoplasm. It catalyses the reaction cytidine(1402) in 16S rRNA + S-adenosyl-L-methionine = N(4)-methylcytidine(1402) in 16S rRNA + S-adenosyl-L-homocysteine + H(+). Specifically methylates the N4 position of cytidine in position 1402 (C1402) of 16S rRNA. This is Ribosomal RNA small subunit methyltransferase H from Pseudomonas fluorescens (strain Pf0-1).